The following is a 490-amino-acid chain: N-succinylglutamate 5-semialdehyde dehydrogenase (490 aa).

NAD(+) is bound at residue 223-228 (GSSRTG). Active-site residues include Glu-246 and Cys-280.

This sequence belongs to the aldehyde dehydrogenase family. AstD subfamily.

It carries out the reaction N-succinyl-L-glutamate 5-semialdehyde + NAD(+) + H2O = N-succinyl-L-glutamate + NADH + 2 H(+). The protein operates within amino-acid degradation; L-arginine degradation via AST pathway; L-glutamate and succinate from L-arginine: step 4/5. Functionally, catalyzes the NAD-dependent reduction of succinylglutamate semialdehyde into succinylglutamate. This Pseudoalteromonas atlantica (strain T6c / ATCC BAA-1087) protein is N-succinylglutamate 5-semialdehyde dehydrogenase.